An 864-amino-acid chain; its full sequence is Alanine--tRNA ligase (864 aa).

Positions 534, 538, 639, and 643 each coordinate Zn(2+).

The protein belongs to the class-II aminoacyl-tRNA synthetase family. Requires Zn(2+) as cofactor.

The protein localises to the cytoplasm. The catalysed reaction is tRNA(Ala) + L-alanine + ATP = L-alanyl-tRNA(Ala) + AMP + diphosphate. Functionally, catalyzes the attachment of alanine to tRNA(Ala) in a two-step reaction: alanine is first activated by ATP to form Ala-AMP and then transferred to the acceptor end of tRNA(Ala). Also edits incorrectly charged Ser-tRNA(Ala) and Gly-tRNA(Ala) via its editing domain. In Aster yellows witches'-broom phytoplasma (strain AYWB), this protein is Alanine--tRNA ligase.